A 288-amino-acid polypeptide reads, in one-letter code: Long chain fatty acid elongase 1 (288 aa).

The next 7 membrane-spanning stretches (helical) occupy residues 39–59 (FFADHFDVTIQASILYMVVVF), 73–93 (LTIPLNIWNFILAAFSIAGAV), 126–146 (WVWLFMASKLFELVDTIFLVL), 150–170 (PLMFLHWYHHILTMIYAWYSH), 180–197 (GIYLNFVVHAFMYSYYFL), 217–237 (IVQFIISCAVLAHLGYLMHFT), and 247–267 (VFKLAVFMDTTYLALFVNFFL).

The protein belongs to the ELO family.

The protein localises to the membrane. It catalyses the reaction (6Z,9Z,12Z)-octadecatrienoyl-CoA + malonyl-CoA + H(+) = (8Z,11Z,14Z)-3-oxoeicosatrienoyl-CoA + CO2 + CoA. The catalysed reaction is (6Z,9Z,12Z,15Z)-octadecatetraenoyl-CoA + malonyl-CoA + H(+) = (8Z,11Z,14Z,17Z)-3-oxoicosatetraenoyl-CoA + CO2 + CoA. The enzyme catalyses (9Z)-hexadecenoyl-CoA + malonyl-CoA + H(+) = 3-oxo-(11Z)-octadecenoyl-CoA + CO2 + CoA. It participates in lipid metabolism; fatty acid biosynthesis. In terms of biological role, catalyzes the first and rate-limiting reaction of the four reactions that constitute the long-chain fatty acids elongation cycle. Uses malonyl-CoA to add 2 carbons per cycle to the chain of long-chain fatty acids. Condensing enzyme that catalyzes the elongation of monounsaturated (MUFA) and polyunsaturated (PUFA) fatty acids that are involved in multiple biological processes as precursors of membrane lipids and lipid mediators. In Caenorhabditis elegans, this protein is Long chain fatty acid elongase 1.